The sequence spans 282 residues: Bifunctional protein FolD (282 aa).

An NADP(+)-binding site is contributed by 163-165; the sequence is GRS.

The protein belongs to the tetrahydrofolate dehydrogenase/cyclohydrolase family. As to quaternary structure, homodimer.

It carries out the reaction (6R)-5,10-methylene-5,6,7,8-tetrahydrofolate + NADP(+) = (6R)-5,10-methenyltetrahydrofolate + NADPH. It catalyses the reaction (6R)-5,10-methenyltetrahydrofolate + H2O = (6R)-10-formyltetrahydrofolate + H(+). It participates in one-carbon metabolism; tetrahydrofolate interconversion. Functionally, catalyzes the oxidation of 5,10-methylenetetrahydrofolate to 5,10-methenyltetrahydrofolate and then the hydrolysis of 5,10-methenyltetrahydrofolate to 10-formyltetrahydrofolate. The chain is Bifunctional protein FolD from Leuconostoc citreum (strain KM20).